We begin with the raw amino-acid sequence, 368 residues long: RNA polymerase sigma factor SigA (368 aa).

The disordered stretch occupies residues Leu-69 to Pro-90. Residues Asn-71–Asn-83 show a composition bias toward basic and acidic residues. Residues Leu-135–Thr-205 are sigma-70 factor domain-2. Residues Asp-159–Gln-162 carry the Interaction with polymerase core subunit RpoC motif. Residues Glu-214–His-290 form a sigma-70 factor domain-3 region. Residues Val-303 to His-356 form a sigma-70 factor domain-4 region. Residues Leu-329–Ala-348 constitute a DNA-binding region (H-T-H motif).

This sequence belongs to the sigma-70 factor family. RpoD/SigA subfamily. Interacts transiently with the RNA polymerase catalytic core.

It is found in the cytoplasm. Functionally, sigma factors are initiation factors that promote the attachment of RNA polymerase to specific initiation sites and are then released. This sigma factor is the primary sigma factor during exponential growth. The protein is RNA polymerase sigma factor SigA of Staphylococcus aureus (strain N315).